The chain runs to 75 residues: OcyC3 (75 aa).

An N-terminal signal peptide occupies residues 1–22 (MQYKTFLVISLAYLLVADEAAA). Positions 51–75 (EINNVFEPYHENLDLELERFLSQLQ) are excised as a propeptide.

As to expression, expressed by the venom gland.

Its subcellular location is the secreted. The protein localises to the target cell membrane. In terms of biological role, amphipathic peptide with probable antimicrobial activity. May act by disrupting the integrity of the bacterial cell membrane. The chain is OcyC3 from Opisthacanthus cayaporum (South American scorpion).